The chain runs to 131 residues: MAGTKPGDLGGVKVGQYVVIEGVACKVMDTAHSKPGKHGGAKVRLVAVGIFEPVKKEHVGPASSRIDIPLIDKRKGQVLALMGDNVQIMDMETYETLEIPMPDDVEGIESGVEVEYFEAMDRYKITRVISK.

Lys-37 carries the hypusine modification.

Belongs to the eIF-5A family.

The protein resides in the cytoplasm. Functions by promoting the formation of the first peptide bond. This Methanococcus maripaludis (strain C7 / ATCC BAA-1331) protein is Translation initiation factor 5A (eIF5A).